Reading from the N-terminus, the 192-residue chain is Dynein axonemal light chain 1 (192 aa).

4 LRR repeats span residues 49–70 (NCER…NGLK), 71–92 (NLKI…EAVG), 94–115 (TLEE…HVMK), and 116–137 (KLKV…LKLA). Residues 150–192 (NPLEEKYSADGNWIEEATKRLPKLKKLDGNPVIKQEEETEGES) form the LRRCT domain.

The protein belongs to the dynein light chain LC1-type family. Interacts with DNAH5, a outer arm dynein heavy chain. Interacts with tubulin located within the A-tubule of the outer doublets in a ATP-independent manner.

The protein resides in the cytoplasm. Its subcellular location is the cytoskeleton. It localises to the cilium axoneme. Its function is as follows. Part of the multisubunit axonemal ATPase complexes that generate the force for cilia motility and govern beat frequency. Component of the outer arm dynein (ODA). May be involved in a mechanosensory feedback mechanism controlling ODA activity based on external conformational cues by tethering the outer arm dynein heavy chain (DNAH5) to the microtubule within the axoneme. This chain is Dynein axonemal light chain 1 (dnal1), found in Danio rerio (Zebrafish).